The chain runs to 1401 residues: Enhancer of mRNA-decapping protein 4 (1401 aa).

Alanine 2 carries the post-translational modification N-acetylalanine. 2 positions are modified to phosphoserine: serine 3 and serine 6. A disordered region spans residues 23–42 (DRPAGGPSAESPRPSSAYNG). WD repeat units lie at residues 121–164 (QPVA…VISV), 167–206 (SERTLLKGFTGSVADLAFAHLNSPQLACLDEAGNLFVWRL), 217–269 (ILVH…VWDL), 287–326 (KQGFIVVKGHSTCLSEGALSPDGTVLATASHDGYVKFWQI), 335–385 (RCLH…MWCT), 389–426 (TCLQTIRFSPDIFSSVSVPPSLKVCLDLSAEYLILSDV), and 432–475 (YVME…LRHT). Lysine 125 carries the post-translational modification N6-acetyllysine. The disordered stretch occupies residues 545–565 (TFGESRPELGSEGLGSAAHGS). Residues serine 560, serine 565, serine 583, and serine 585 each carry the phosphoserine modification. 2 disordered regions span residues 603–628 (ASLQQITASPSSSSSGSSSSSSSSSS) and 662–702 (DGSL…QVPT). Residues 609-628 (TASPSSSSSGSSSSSSSSSS) are compositionally biased toward low complexity. Positions 663–675 (GSLTMSSSGSLQA) are enriched in polar residues. Serine 676 carries the phosphoserine modification. Residues 677–689 (PRGLLPGLLPAPA) show a composition bias toward low complexity. Phosphothreonine is present on threonine 693. 3 positions are modified to phosphoserine: serine 708, serine 723, and serine 725. Disordered regions lie at residues 717-741 (LGLPQASPSRTRSPDVISSASTALS) and 778-808 (LLSPRPRPGPELGPQLGLDGGPGDGDRHNTP). Positions 722-741 (ASPSRTRSPDVISSASTALS) are enriched in polar residues. Threonine 727 is modified (phosphothreonine). Phosphoserine is present on residues serine 729 and serine 741. Threonine 821 carries the phosphothreonine modification. Residues serine 844, serine 871, serine 875, serine 879, serine 887, serine 890, and serine 892 each carry the phosphoserine modification. A disordered region spans residues 868–946 (QRDSQDASAE…RLTEHQVAEP (79 aa)). The tract at residues 913–934 (GSPRTSPKLKRKSKKDDGDAAM) is sufficient for nuclear localization. The stretch at 954–1025 (IWQQQRELAE…GGQLQEQLTQ (72 aa)) forms a coiled coil. Phosphoserine is present on residues serine 967 and serine 1380.

Belongs to the WD repeat EDC4 family. As to quaternary structure, part of a decapping complex consisting of DCP1A, DCP2, EDC3, EDC4 and probably DDX6. Part of a complex consisting of DCP1A, EDC3, EDC4 and DDX6. Part of a complex consisting of DCP1B, EDC3, EDC4 and DDX6. Interacts with DCP2. Interacts with RC3H1. Interacts with NBDY. Interacts with TEX19. Interacts with LSM14A. Interacts with DDX6. In terms of assembly, (Microbial infection) Interacts with rotavirus A non-structural protein 2; this interaction probably plays a role in the sequestration of EDC4 in viral factories. Interacts with rotavirus A non-structural protein 5; this interaction probably plays a role in its sequestration in viral factories.

It is found in the cytoplasm. It localises to the P-body. The protein localises to the nucleus. In terms of biological role, in the process of mRNA degradation, seems to play a role in mRNA decapping. Component of a complex containing DCP2 and DCP1A which functions in decapping of ARE-containing mRNAs. Promotes complex formation between DCP1A and DCP2. Enhances the catalytic activity of DCP2 (in vitro). The protein is Enhancer of mRNA-decapping protein 4 (EDC4) of Homo sapiens (Human).